The primary structure comprises 208 residues: Effector protein MavE (208 aa).

Residues 77–80 (NPRY) carry the NPxY eukaryotic motif motif. The chain crosses the membrane as a helical span at residues 184–204 (VLFPFVAATVAVAATAASVLF).

As to quaternary structure, homotrimer.

The protein resides in the secreted. Its subcellular location is the host vacuole. It localises to the host pathogen-containing vacuole. It is found in the host pathogen-containing vacuole membrane. Virulence effector that is indispensable for endoplasmic reticulum (ER)-mediated remodeling of the Legionella pneumophila-containing vacuole (LCV) and lysosomal evasion. Essential for intracellular replication in human monocyte-derived macrophages (hMDMs) and amoebae, as well as for intrapulmonary proliferation in mice. The polypeptide is Effector protein MavE (Legionella pneumophila subsp. pneumophila (strain Philadelphia 1 / ATCC 33152 / DSM 7513)).